The sequence spans 406 residues: 4-hydroxy-3-methylbut-2-enyl diphosphate reductase (406 aa).

Residue Cys-66 coordinates [4Fe-4S] cluster. His-96 is a (2E)-4-hydroxy-3-methylbut-2-enyl diphosphate binding site. His-96 lines the dimethylallyl diphosphate pocket. Residue His-96 participates in isopentenyl diphosphate binding. Cys-157 contributes to the [4Fe-4S] cluster binding site. (2E)-4-hydroxy-3-methylbut-2-enyl diphosphate is bound at residue His-185. Dimethylallyl diphosphate is bound at residue His-185. His-185 serves as a coordination point for isopentenyl diphosphate. Glu-187 functions as the Proton donor in the catalytic mechanism. A (2E)-4-hydroxy-3-methylbut-2-enyl diphosphate-binding site is contributed by Thr-250. Cys-288 is a binding site for [4Fe-4S] cluster. 4 residues coordinate (2E)-4-hydroxy-3-methylbut-2-enyl diphosphate: Ser-317, Ser-318, Asn-319, and Ser-379. Dimethylallyl diphosphate-binding residues include Ser-317, Ser-318, Asn-319, and Ser-379. Isopentenyl diphosphate-binding residues include Ser-317, Ser-318, Asn-319, and Ser-379.

This sequence belongs to the IspH family. [4Fe-4S] cluster is required as a cofactor.

The enzyme catalyses isopentenyl diphosphate + 2 oxidized [2Fe-2S]-[ferredoxin] + H2O = (2E)-4-hydroxy-3-methylbut-2-enyl diphosphate + 2 reduced [2Fe-2S]-[ferredoxin] + 2 H(+). The catalysed reaction is dimethylallyl diphosphate + 2 oxidized [2Fe-2S]-[ferredoxin] + H2O = (2E)-4-hydroxy-3-methylbut-2-enyl diphosphate + 2 reduced [2Fe-2S]-[ferredoxin] + 2 H(+). It functions in the pathway isoprenoid biosynthesis; dimethylallyl diphosphate biosynthesis; dimethylallyl diphosphate from (2E)-4-hydroxy-3-methylbutenyl diphosphate: step 1/1. The protein operates within isoprenoid biosynthesis; isopentenyl diphosphate biosynthesis via DXP pathway; isopentenyl diphosphate from 1-deoxy-D-xylulose 5-phosphate: step 6/6. Catalyzes the conversion of 1-hydroxy-2-methyl-2-(E)-butenyl 4-diphosphate (HMBPP) into a mixture of isopentenyl diphosphate (IPP) and dimethylallyl diphosphate (DMAPP). Acts in the terminal step of the DOXP/MEP pathway for isoprenoid precursor biosynthesis. The polypeptide is 4-hydroxy-3-methylbut-2-enyl diphosphate reductase (Synechococcus sp. (strain RCC307)).